The primary structure comprises 233 residues: MNKPIIALDFQTYQEVEAFLAQFSGESLSVKVGMELFYSNGPAIVEKIKQQNHAIFLDLKLHDIPNTVKSAMIGLAKLGVDMVNVHASGGKKMMEAAREGLEIGSTSGKRPKLIAVTQLTSTSETDMQKEQLVKASLLESVLHYSDLTKQAGLDGVVCSALEADEIKLQNGSDFLRVTPGIRLASDATDDQIRVVTPEKARSIGSSNIVVGRSITRANDPVAAYNQVLKEWNA.

Substrate is bound by residues Asp9, Lys31, 58-67, Thr120, Arg182, Gln191, Gly211, and Arg212; that span reads DLKLHDIPNT. The active-site Proton donor is Lys60.

This sequence belongs to the OMP decarboxylase family. Type 1 subfamily. Homodimer.

It catalyses the reaction orotidine 5'-phosphate + H(+) = UMP + CO2. The protein operates within pyrimidine metabolism; UMP biosynthesis via de novo pathway; UMP from orotate: step 2/2. Functionally, catalyzes the decarboxylation of orotidine 5'-monophosphate (OMP) to uridine 5'-monophosphate (UMP). The sequence is that of Orotidine 5'-phosphate decarboxylase from Listeria innocua serovar 6a (strain ATCC BAA-680 / CLIP 11262).